The sequence spans 339 residues: Ketol-acid reductoisomerase (NADP(+)) (339 aa).

The KARI N-terminal Rossmann domain occupies 1-182 (MRVYYDRDAD…GGGRSGIIET (182 aa)). NADP(+)-binding positions include 24–27 (YGSQ), Lys48, Ser51, Thr53, and 83–86 (DELQ). His108 is an active-site residue. Gly134 is a binding site for NADP(+). Residues 183–328 (NFREECETDL…AKLRGMMPWI (146 aa)) form the KARI C-terminal knotted domain. Asp191, Glu195, Glu227, and Glu231 together coordinate Mg(2+). Residue Ser252 coordinates substrate.

This sequence belongs to the ketol-acid reductoisomerase family. Mg(2+) is required as a cofactor.

The catalysed reaction is (2R)-2,3-dihydroxy-3-methylbutanoate + NADP(+) = (2S)-2-acetolactate + NADPH + H(+). It carries out the reaction (2R,3R)-2,3-dihydroxy-3-methylpentanoate + NADP(+) = (S)-2-ethyl-2-hydroxy-3-oxobutanoate + NADPH + H(+). The protein operates within amino-acid biosynthesis; L-isoleucine biosynthesis; L-isoleucine from 2-oxobutanoate: step 2/4. Its pathway is amino-acid biosynthesis; L-valine biosynthesis; L-valine from pyruvate: step 2/4. In terms of biological role, involved in the biosynthesis of branched-chain amino acids (BCAA). Catalyzes an alkyl-migration followed by a ketol-acid reduction of (S)-2-acetolactate (S2AL) to yield (R)-2,3-dihydroxy-isovalerate. In the isomerase reaction, S2AL is rearranged via a Mg-dependent methyl migration to produce 3-hydroxy-3-methyl-2-ketobutyrate (HMKB). In the reductase reaction, this 2-ketoacid undergoes a metal-dependent reduction by NADPH to yield (R)-2,3-dihydroxy-isovalerate. This chain is Ketol-acid reductoisomerase (NADP(+)), found in Rhizobium etli (strain ATCC 51251 / DSM 11541 / JCM 21823 / NBRC 15573 / CFN 42).